Here is a 339-residue protein sequence, read N- to C-terminus: Annexin A2 (339 aa).

S2 is subject to N-acetylserine. An S100A10-binding site region spans residues 2–24; that stretch reads STVHEILCKLSLEGDHSTPPSAY. At Y24 the chain carries Phosphotyrosine; by SRC. Residue S26 is modified to Phosphoserine; by PKC. Annexin repeat units follow at residues 33-104 and 105-176; these read FDAE…GLLK and TPAQ…ALAK. K49 carries the post-translational modification N6-acetyllysine; alternate. K49 is covalently cross-linked (Glycyl lysine isopeptide (Lys-Gly) (interchain with G-Cter in SUMO1); alternate). K49 participates in a covalent cross-link: Glycyl lysine isopeptide (Lys-Gly) (interchain with G-Cter in SUMO2); alternate. At K152 the chain carries N6-acetyllysine. Phosphoserine is present on S184. Annexin repeat units follow at residues 189–261 and 265–336; these read ELID…NLVQ and NKPL…YLCG. Position 199 is a phosphotyrosine (Y199). K227 bears the N6-acetyllysine mark.

The protein belongs to the annexin family. Heterotetramer containing 2 light chains of S100A10/p11 and 2 heavy chains of ANXA2/p36. Interacts with ATP1B1. Interacts with DYSF. Interacts with COCH. Interacts (via repeat Annexin 1) with PCSK9 (via the C-terminal domain); the interaction inhibits the degradation of LDLR. Interacts with CEACAM1 (via the cytoplasmic domain); this interaction is regulated by phosphorylation of CEACAM1. Interacts with APPL2 and APPL1; targets APPL2 to endosomes and acting in parallel to RAB5A. Interacts with S100A4. May interact with UBAP2. Interacts with PLEKHG4B; this interaction is required for PLEKHG4B localization to cell-cell adhesions. ISGylated.

The protein localises to the secreted. The protein resides in the extracellular space. Its subcellular location is the extracellular matrix. It is found in the basement membrane. Calcium-regulated membrane-binding protein whose affinity for calcium is greatly enhanced by anionic phospholipids. It binds two calcium ions with high affinity. May be involved in heat-stress response. Inhibits PCSK9-enhanced LDLR degradation, probably reduces PCSK9 protein levels via a translational mechanism but also competes with LDLR for binding with PCSK9. Binds to endosomes damaged by phagocytosis of particulate wear debris and participates in endosomal membrane stabilization, thereby limiting NLRP3 inflammasome activation. Required for endothelial cell surface plasmin generation and may support fibrinolytic surveillance and neoangiogenesis. The polypeptide is Annexin A2 (ANXA2) (Canis lupus familiaris (Dog)).